The sequence spans 242 residues: Ribosomal RNA small subunit methyltransferase G (242 aa).

S-adenosyl-L-methionine-binding positions include Gly-78, Phe-83, 129-130 (AE), and Arg-148. The segment at 221–242 (TKKRYPRKAGVPEKSPIGGKHD) is disordered.

The protein belongs to the methyltransferase superfamily. RNA methyltransferase RsmG family.

The protein localises to the cytoplasm. Specifically methylates the N7 position of a guanine in 16S rRNA. The sequence is that of Ribosomal RNA small subunit methyltransferase G from Oenococcus oeni (strain ATCC BAA-331 / PSU-1).